Consider the following 95-residue polypeptide: DNA-binding protein CENSYa_1764 (95 aa).

Residues 1 to 21 are disordered; the sequence is MSYTDPDDSLPEHVPGEAEMS.

This sequence belongs to the PDCD5 family.

The protein is DNA-binding protein CENSYa_1764 of Cenarchaeum symbiosum (strain A).